Reading from the N-terminus, the 245-residue chain is Enolase-phosphatase E1 (245 aa).

The protein belongs to the HAD-like hydrolase superfamily. MasA/MtnC family. In terms of assembly, monomer. It depends on Mg(2+) as a cofactor.

The catalysed reaction is 5-methylsulfanyl-2,3-dioxopentyl phosphate + H2O = 1,2-dihydroxy-5-(methylsulfanyl)pent-1-en-3-one + phosphate. The protein operates within amino-acid biosynthesis; L-methionine biosynthesis via salvage pathway; L-methionine from S-methyl-5-thio-alpha-D-ribose 1-phosphate: step 3/6. Its pathway is amino-acid biosynthesis; L-methionine biosynthesis via salvage pathway; L-methionine from S-methyl-5-thio-alpha-D-ribose 1-phosphate: step 4/6. In terms of biological role, bifunctional enzyme that catalyzes the enolization of 2,3-diketo-5-methylthiopentyl-1-phosphate (DK-MTP-1-P) into the intermediate 2-hydroxy-3-keto-5-methylthiopentenyl-1-phosphate (HK-MTPenyl-1-P), which is then dephosphorylated to form the acireductone 1,2-dihydroxy-3-keto-5-methylthiopentene (DHK-MTPene). The sequence is that of Enolase-phosphatase E1 from Parasynechococcus marenigrum (strain WH8102).